The sequence spans 440 residues: MVSSNQDLLISPSIPYGEIAVPPSKSHSLRAILFASLSKGTSIIENCLFSPDSQAMLTACEKMGAHVRRIGDSLHIQGNPDPHHCHPRYFHMGNSGIALRFLTALSTLSPTPTLITGSHTLKRRPIAPLLSSLKQLGAHIRQKTSSSIPFTIHGPLSPGHVTISGQDSQYASALAITAALAPYPLSFSIENLKERPWFDLTLDWLHSLNISFLRDQDSLTFPGGQSLESFSYSVPGDYSSAAFLASFGLLSSSSKPTILRNLSSQDSQGDKLLFSLLKQLGAHILIGKHHIEMHPSSFSGGEIDMDPFIDALPILAVLCCFAKNPSRLYNALGAKDKESNRIEAIAHELQKMGGSVHPTRDGLYIEPSRLHGAVVDSHNDHRIAMALAVAGVHASSGQTLLCNTQCINKSFPYFVIAAQTLHANVRHYQADFPLRSSFCR.

Residues Lys-25, Ser-26, and Arg-30 each coordinate 3-phosphoshikimate. A phosphoenolpyruvate-binding site is contributed by Lys-25. Phosphoenolpyruvate contacts are provided by Gly-96 and Arg-124. 3-phosphoshikimate contacts are provided by Ser-168, Gln-169, Asp-310, and Lys-337. Position 169 (Gln-169) interacts with phosphoenolpyruvate. Asp-310 acts as the Proton acceptor in catalysis. Residues Arg-341, Arg-382, and Lys-409 each contribute to the phosphoenolpyruvate site.

The protein belongs to the EPSP synthase family. Monomer.

The protein resides in the cytoplasm. It carries out the reaction 3-phosphoshikimate + phosphoenolpyruvate = 5-O-(1-carboxyvinyl)-3-phosphoshikimate + phosphate. It functions in the pathway metabolic intermediate biosynthesis; chorismate biosynthesis; chorismate from D-erythrose 4-phosphate and phosphoenolpyruvate: step 6/7. Functionally, catalyzes the transfer of the enolpyruvyl moiety of phosphoenolpyruvate (PEP) to the 5-hydroxyl of shikimate-3-phosphate (S3P) to produce enolpyruvyl shikimate-3-phosphate and inorganic phosphate. The sequence is that of 3-phosphoshikimate 1-carboxyvinyltransferase from Chlamydia trachomatis serovar D (strain ATCC VR-885 / DSM 19411 / UW-3/Cx).